The primary structure comprises 156 residues: Probable cyclic pyranopterin monophosphate synthase (156 aa).

Residues 74–76 (MCH) and 110–111 (ME) each bind substrate. D125 is an active-site residue.

It belongs to the MoaC family. As to quaternary structure, homohexamer; trimer of dimers.

It catalyses the reaction (8S)-3',8-cyclo-7,8-dihydroguanosine 5'-triphosphate = cyclic pyranopterin phosphate + diphosphate. It functions in the pathway cofactor biosynthesis; molybdopterin biosynthesis. Catalyzes the conversion of (8S)-3',8-cyclo-7,8-dihydroguanosine 5'-triphosphate to cyclic pyranopterin monophosphate (cPMP). This chain is Probable cyclic pyranopterin monophosphate synthase, found in Methanospirillum hungatei JF-1 (strain ATCC 27890 / DSM 864 / NBRC 100397 / JF-1).